Reading from the N-terminus, the 462-residue chain is L-seryl-tRNA(Sec) selenium transferase (462 aa).

Lys-293 carries the N6-(pyridoxal phosphate)lysine modification.

Belongs to the SelA family. It depends on pyridoxal 5'-phosphate as a cofactor.

Its subcellular location is the cytoplasm. The catalysed reaction is L-seryl-tRNA(Sec) + selenophosphate + H(+) = L-selenocysteinyl-tRNA(Sec) + phosphate. It functions in the pathway aminoacyl-tRNA biosynthesis; selenocysteinyl-tRNA(Sec) biosynthesis; selenocysteinyl-tRNA(Sec) from L-seryl-tRNA(Sec) (bacterial route): step 1/1. In terms of biological role, converts seryl-tRNA(Sec) to selenocysteinyl-tRNA(Sec) required for selenoprotein biosynthesis. The protein is L-seryl-tRNA(Sec) selenium transferase of Clostridium botulinum (strain Loch Maree / Type A3).